We begin with the raw amino-acid sequence, 387 residues long: Chaperone protein DnaJ (387 aa).

The J domain occupies 6 to 71; sequence DYYEILGVPR…EKRRKYDQFG (66 aa). Residues 146–228 form a CR-type zinc finger; sequence GCEKEIPIYR…CGGTGTVRRQ (83 aa). Cys-159, Cys-162, Cys-176, Cys-179, Cys-202, Cys-205, Cys-216, and Cys-219 together coordinate Zn(2+). 4 CXXCXGXG motif repeats span residues 159 to 166, 176 to 183, 202 to 209, and 216 to 223; these read CSVCGGSG, CQKCGGTG, CDACGGVG, and CRECGGTG.

It belongs to the DnaJ family. As to quaternary structure, homodimer. Zn(2+) serves as cofactor.

It is found in the cytoplasm. Its function is as follows. Participates actively in the response to hyperosmotic and heat shock by preventing the aggregation of stress-denatured proteins and by disaggregating proteins, also in an autonomous, DnaK-independent fashion. Unfolded proteins bind initially to DnaJ; upon interaction with the DnaJ-bound protein, DnaK hydrolyzes its bound ATP, resulting in the formation of a stable complex. GrpE releases ADP from DnaK; ATP binding to DnaK triggers the release of the substrate protein, thus completing the reaction cycle. Several rounds of ATP-dependent interactions between DnaJ, DnaK and GrpE are required for fully efficient folding. Also involved, together with DnaK and GrpE, in the DNA replication of plasmids through activation of initiation proteins. The chain is Chaperone protein DnaJ from Caldicellulosiruptor saccharolyticus (strain ATCC 43494 / DSM 8903 / Tp8T 6331).